Here is a 285-residue protein sequence, read N- to C-terminus: Urease accessory protein UreD (285 aa).

Belongs to the UreD family. UreD, UreF and UreG form a complex that acts as a GTP-hydrolysis-dependent molecular chaperone, activating the urease apoprotein by helping to assemble the nickel containing metallocenter of UreC. The UreE protein probably delivers the nickel.

It localises to the cytoplasm. Its function is as follows. Required for maturation of urease via the functional incorporation of the urease nickel metallocenter. This chain is Urease accessory protein UreD, found in Methylobacillus flagellatus (strain ATCC 51484 / DSM 6875 / VKM B-1610 / KT).